Reading from the N-terminus, the 1580-residue chain is Adhesion G protein-coupled receptor L3 (1580 aa).

A signal peptide spans 1 to 19 (MWPSQLLVFMMLLAPIIHG). The Extracellular segment spans residues 20-949 (GKHSERHPAL…VHDLLLDVIT (930 aa)). Residues 23–81 (SERHPALASPLRHAERGPGGALPPRHLLQQPAAERATAHRGPGPRGATRGVRGPGAHGA) are disordered. The region spanning 103–192 (SCESYPIELR…KYLEVQYECV (90 aa)) is the SUEL-type lectin domain. 5 disulfides stabilise this stretch: Cys104-Cys134, Cys113-Cys191, Cys146-Cys178, Cys159-Cys165, and Cys203-Cys385. N-linked (GlcNAc...) asparagine glycosylation is present at Asn161. One can recognise an Olfactomedin-like domain in the interval 202–461 (LCPGLLKGVY…VVKYSLDFGP (260 aa)). The interval 317-347 (YHDTSPYRWGGKSDIDLAVDENGLWVIYATE) is interaction with FLRT3. Ca(2+) contacts are provided by Asp332, Asn380, Ala381, and Val435. The tract at residues 494–540 (EISTTGPLGTGSTTTSTTLRTTTWSPGRSTTPSVSGRRNRSTSTPSP) is disordered. The span at 496–521 (STTGPLGTGSTTTSTTLRTTTWSPGR) shows a compositional bias: low complexity. The segment covering 522 to 539 (STTPSVSGRRNRSTSTPS) has biased composition (polar residues). Residues Asn532, Asn617, Asn827, Asn840, Asn885, and Asn911 are each glycosylated (N-linked (GlcNAc...) asparagine). The GAIN-B domain maps to 756 to 935 (DIVRENTDNI…AVLMAHVEVK (180 aa)). Intrachain disulfides connect Cys886/Cys917 and Cys905/Cys919. Positions 886–935 (CSFWSYSKRTMTGYWSTQGCRLLTTNKTHTTCSCNHLTNFAVLMAHVEVK) are GPS. Positions 923 to 939 (TNFAVLMAHVEVKHSDA) are stachel. Residues 950–970 (WVGILLSLVCLLICIFTFCFF) traverse the membrane as a helical segment. Residues 971–978 (RGLQSDRN) are Cytoplasmic-facing. A helical membrane pass occupies residues 979 to 999 (TIHKNLCISLFVAELLFLIGI). N-linked (GlcNAc...) asparagine glycosylation is present at Asn1000. The Extracellular portion of the chain corresponds to 1000–1007 (NRTDQPIA). The helical transmembrane segment at 1008-1028 (CAVFAALLHFFFLAAFTWMFL) threads the bilayer. Topologically, residues 1029–1050 (EGVQLYIMLVEVFESEHSRRKY) are cytoplasmic. A helical transmembrane segment spans residues 1051-1071 (FYLVGYGMPALIVAVSAAVDY). Over 1072-1088 (RSYGTDKVCWLRLDTYF) the chain is Extracellular. The helical transmembrane segment at 1089–1109 (IWSFIGPATLIIMLNVIFLGI) threads the bilayer. The Cytoplasmic portion of the chain corresponds to 1110 to 1142 (ALYKMFHHTAILKPESGCLDNINYEDNRPFIKS). Residues 1143–1163 (WVIGAIALLCLLGLTWAFGLM) traverse the membrane as a helical segment. Residues 1164–1169 (YINEST) lie on the Extracellular side of the membrane. Residue Asn1166 is glycosylated (N-linked (GlcNAc...) asparagine). A helical membrane pass occupies residues 1170–1190 (VIMAYLFTIFNSLQGMFIFIF). Topologically, residues 1191 to 1580 (HCVLQKKVRK…KGPAHLVTSL (390 aa)) are cytoplasmic. Positions 1213 to 1238 (GRSTESSIGSGKTSGSRTPGRYSTGS) are disordered. Ser1254 carries the phosphoserine modification. A disordered region spans residues 1555–1580 (FIVPPNKDGTPPEGSSKGPAHLVTSL). The PDZ-binding motif lies at 1575–1580 (HLVTSL).

Belongs to the G-protein coupled receptor 2 family. LN-TM7 subfamily. As to quaternary structure, heterodimer of 2 chains generated by proteolytic processing; the large extracellular N-terminal fragment and the membrane-bound C-terminal fragment predominantly remain associated and non-covalently linked. Interacts (via olfactomedin-like domain) with FLRT1 (via extracellular domain). Interacts (via olfactomedin-like domain) with FLRT2 (via extracellular domain). Interacts (via olfactomedin-like domain) with FLRT3 (via extracellular domain); the interaction is direct. Interacts (via extracellular domain) with TENM1. Interacts (via extracellular domain) with TENM2. Interacts (via extracellular domain) with TENM3. Identified in a complex with FLRT3 and UNC5B; does not interact with UNC5B by itself. Identified in a complex with FLRT3 and UNC5D; does not interact with UNC5D by itself. Interacts (via PDZ-binding motif) with SHANK3. Interacts (via PDZ-binding motif) with DLG4. Autoproteolytically processed at the GPS region of the GAIN-B domain; this cleavage modulates receptor activity. Brain-specific distribution but low levels are also detected in lung and spleen.

Its subcellular location is the cell membrane. The protein localises to the postsynaptic cell membrane. It is found in the cell projection. The protein resides in the axon. It localises to the cell junction. Forms a heterodimer of 2 chains generated by proteolytic processing that remain associated through non-covalent interactions mediated by the GAIN-B domain. In the inactivated receptor, the Stachel sequence (also named stalk) is embedded in the GAIN-B domain, where it adopts a beta-strand conformation. On activation, the Stachel moves into the 7 transmembrane region and adopts a twisted hook-shaped configuration that forms contacts within the receptor, leading to coupling of a G-alpha protein, which activates signaling. The cleaved GAIN-B and N-terminal domains can then dissociate from the rest of the receptor. Functionally, orphan adhesion G-protein coupled receptor (aGPCR), which mediates synapse specificity. Ligand binding causes a conformation change that triggers signaling via guanine nucleotide-binding proteins (G proteins) and modulates the activity of downstream effectors. ADGRL3 is coupled with different classes of G alpha proteins, such as G(12)/G(13), G(s), G(i) or G(q), depending on the context. Coupling to G(12)/G(13) G proteins, which mediates the activation Rho small GTPases is the most efficient. Following G-protein coupled receptor activation, associates with cell adhesion molecules that are expressed at the surface of adjacent cells to direct synapse specificity. Specifically mediates the establishment of Schaffer-collateral synapses formed by CA3-region axons on CA1-region pyramidal neurons in the hippocampus. Localizes to postsynaptic spines in excitatory synapses in the S.oriens and S.radiatum and interacts with presynaptic cell adhesion molecules FLRT3 and TENM2, promoting synapse formation. Plays a role in the development of glutamatergic synapses in the cortex. Important in determining the connectivity rates between the principal neurons in the cortex. Its function is as follows. Orphan adhesion G-protein coupled receptor (aGPCR), which mediates synapse specificity. Ligand binding causes a conformation change that triggers signaling via guanine nucleotide-binding proteins (G proteins) and modulates the activity of downstream effectors, such as adenylate cyclase. Isoform 1 is specifically coupled to G(s) G proteins and mediates activation of adenylate cyclase activity. Following G-protein coupled receptor activation, undergoes liquid-liquid phase transition, associates with (1) cell adhesion molecules that are expressed at the surface of adjacent cells, as well as (2) PDZ-containing proteins, such as SHANK3 and DLG4, in the cytoplasm to direct synapse formation. This chain is Adhesion G protein-coupled receptor L3, found in Bos taurus (Bovine).